Here is a 373-residue protein sequence, read N- to C-terminus: Spore germination protein KB (373 aa).

A run of 10 helical transmembrane segments spans residues 11–31 (LFVM…PGSM), 37–57 (WIAV…YQGI), 78–98 (LSWL…ARVL), 105–125 (LLTF…LMVV), 143–163 (LLFG…IVSG), 185–205 (VFTQ…MIFP), 219–239 (IAMA…ISVL), 269–289 (VFFM…YLYA), 306–326 (LAYP…TNFS), and 338–358 (LYIH…VAVW).

Belongs to the amino acid-polyamine-organocation (APC) superfamily. Spore germination protein (SGP) (TC 2.A.3.9) family.

It is found in the cell membrane. In terms of biological role, involved in the germination response to the combination of glucose, fructose, L-asparagine, and KCl. In Bacillus subtilis (strain 168), this protein is Spore germination protein KB (gerKB).